The primary structure comprises 431 residues: 23S rRNA (uracil(1939)-C(5))-methyltransferase RlmD (431 aa).

The TRAM domain maps to 10–68 (RVTTRQIITVKVNDLDSFGQGVARHNGKALFIPGLLPEESAEVIITEDKKQFARARVSR). 4 residues coordinate [4Fe-4S] cluster: cysteine 81, cysteine 87, cysteine 90, and cysteine 161. Residues glutamine 264, phenylalanine 293, asparagine 298, glutamate 314, asparagine 341, and aspartate 362 each coordinate S-adenosyl-L-methionine. The active-site Nucleophile is the cysteine 388.

The protein belongs to the class I-like SAM-binding methyltransferase superfamily. RNA M5U methyltransferase family. RlmD subfamily.

It catalyses the reaction uridine(1939) in 23S rRNA + S-adenosyl-L-methionine = 5-methyluridine(1939) in 23S rRNA + S-adenosyl-L-homocysteine + H(+). Its function is as follows. Catalyzes the formation of 5-methyl-uridine at position 1939 (m5U1939) in 23S rRNA. This Salmonella typhi protein is 23S rRNA (uracil(1939)-C(5))-methyltransferase RlmD.